The chain runs to 49 residues: Large ribosomal subunit protein bL33 (49 aa).

It belongs to the bacterial ribosomal protein bL33 family.

This is Large ribosomal subunit protein bL33 from Clostridium acetobutylicum (strain ATCC 824 / DSM 792 / JCM 1419 / IAM 19013 / LMG 5710 / NBRC 13948 / NRRL B-527 / VKM B-1787 / 2291 / W).